The following is a 165-amino-acid chain: Lipoprotein signal peptidase (165 aa).

5 helical membrane passes run 10 to 30 (LKWL…KYWV), 42 to 62 (VLPG…GLFT), 71 to 91 (LFVW…YKLI), 105 to 125 (IGGA…VDFI), and 133 to 153 (HWPT…IVTI). Catalysis depends on residues D123 and D141.

Belongs to the peptidase A8 family.

The protein resides in the cell inner membrane. It carries out the reaction Release of signal peptides from bacterial membrane prolipoproteins. Hydrolyzes -Xaa-Yaa-Zaa-|-(S,diacylglyceryl)Cys-, in which Xaa is hydrophobic (preferably Leu), and Yaa (Ala or Ser) and Zaa (Gly or Ala) have small, neutral side chains.. The protein operates within protein modification; lipoprotein biosynthesis (signal peptide cleavage). In terms of biological role, this protein specifically catalyzes the removal of signal peptides from prolipoproteins. In Blochmanniella pennsylvanica (strain BPEN), this protein is Lipoprotein signal peptidase.